We begin with the raw amino-acid sequence, 146 residues long: D-aminoacyl-tRNA deacylase (146 aa).

The Gly-cisPro motif, important for rejection of L-amino acids motif lies at 137–138 (GP).

It belongs to the DTD family. In terms of assembly, homodimer.

It localises to the cytoplasm. It catalyses the reaction glycyl-tRNA(Ala) + H2O = tRNA(Ala) + glycine + H(+). The enzyme catalyses a D-aminoacyl-tRNA + H2O = a tRNA + a D-alpha-amino acid + H(+). Functionally, an aminoacyl-tRNA editing enzyme that deacylates mischarged D-aminoacyl-tRNAs. Also deacylates mischarged glycyl-tRNA(Ala), protecting cells against glycine mischarging by AlaRS. Acts via tRNA-based rather than protein-based catalysis; rejects L-amino acids rather than detecting D-amino acids in the active site. By recycling D-aminoacyl-tRNA to D-amino acids and free tRNA molecules, this enzyme counteracts the toxicity associated with the formation of D-aminoacyl-tRNA entities in vivo and helps enforce protein L-homochirality. This chain is D-aminoacyl-tRNA deacylase, found in Bacillus cereus (strain G9842).